The following is a 476-amino-acid chain: Sulfate adenylyltransferase subunit 1 (476 aa).

The 220-residue stretch at 24–243 (KSLLRFLTCG…VDVEKEKEAG (220 aa)) folds into the tr-type G domain. The tract at residues 33-40 (GSVDDGKS) is G1. GTP is bound at residue 33 to 40 (GSVDDGKS). Residues 91 to 95 (GITID) form a G2 region. Residues 112–115 (DTPG) form a G3 region. GTP is bound by residues 112–116 (DTPGH) and 167–170 (NKMD). Residues 167–170 (NKMD) are G4. A G5 region spans residues 205 to 207 (SAL).

It belongs to the TRAFAC class translation factor GTPase superfamily. Classic translation factor GTPase family. CysN/NodQ subfamily. As to quaternary structure, heterodimer composed of CysD, the smaller subunit, and CysN.

The enzyme catalyses sulfate + ATP + H(+) = adenosine 5'-phosphosulfate + diphosphate. Its pathway is sulfur metabolism; hydrogen sulfide biosynthesis; sulfite from sulfate: step 1/3. With CysD forms the ATP sulfurylase (ATPS) that catalyzes the adenylation of sulfate producing adenosine 5'-phosphosulfate (APS) and diphosphate, the first enzymatic step in sulfur assimilation pathway. APS synthesis involves the formation of a high-energy phosphoric-sulfuric acid anhydride bond driven by GTP hydrolysis by CysN coupled to ATP hydrolysis by CysD. The sequence is that of Sulfate adenylyltransferase subunit 1 from Vibrio vulnificus (strain YJ016).